The following is a 129-amino-acid chain: Small ribosomal subunit protein uS11 (129 aa).

It belongs to the universal ribosomal protein uS11 family. As to quaternary structure, part of the 30S ribosomal subunit. Interacts with proteins S7 and S18. Binds to IF-3.

Its function is as follows. Located on the platform of the 30S subunit, it bridges several disparate RNA helices of the 16S rRNA. Forms part of the Shine-Dalgarno cleft in the 70S ribosome. This is Small ribosomal subunit protein uS11 from Paracoccus denitrificans (strain Pd 1222).